Reading from the N-terminus, the 128-residue chain is Fluoride-specific ion channel FluC (128 aa).

A run of 4 helical transmembrane segments spans residues 1-21, 45-65, 70-90, and 99-119; these read MPERYAALLLVGAGGFVGATA, LAGCFLIGFISQLSVSSSLVS, LLLATGFCGGFTTFSSYMYEI, and IFYSTLYLLGSIVGGILCLYF. The Na(+) site is built by Gly-78 and Thr-81.

Belongs to the fluoride channel Fluc/FEX (TC 1.A.43) family.

The protein localises to the cell inner membrane. The enzyme catalyses fluoride(in) = fluoride(out). Na(+) is not transported, but it plays an essential structural role and its presence is essential for fluoride channel function. Fluoride-specific ion channel. Important for reducing fluoride concentration in the cell, thus reducing its toxicity. The chain is Fluoride-specific ion channel FluC from Chlorobium phaeobacteroides (strain BS1).